The sequence spans 159 residues: Cytochrome c-type biogenesis protein CcmE (159 aa).

The Cytoplasmic segment spans residues 1–8 (MNIRRKNR). The chain crosses the membrane as a helical; Signal-anchor for type II membrane protein span at residues 9-29 (LWIACAVLAGLALTIGLVLYA). The Periplasmic portion of the chain corresponds to 30–159 (LRSNIDLFYT…PASVYKDPAS (130 aa)). Heme-binding residues include histidine 130 and tyrosine 134. The span at 132–147 (ENYTPPEVEKAMEANH) shows a compositional bias: basic and acidic residues. Residues 132–159 (ENYTPPEVEKAMEANHRRPASVYKDPAS) form a disordered region.

Belongs to the CcmE/CycJ family.

The protein resides in the cell inner membrane. Heme chaperone required for the biogenesis of c-type cytochromes. Transiently binds heme delivered by CcmC and transfers the heme to apo-cytochromes in a process facilitated by CcmF and CcmH. This is Cytochrome c-type biogenesis protein CcmE from Shigella sonnei (strain Ss046).